The following is a 259-amino-acid chain: Deoxyribose-phosphate aldolase (259 aa).

The active-site Proton donor/acceptor is the D102. The Schiff-base intermediate with acetaldehyde role is filled by K167. Catalysis depends on K201, which acts as the Proton donor/acceptor.

The protein belongs to the DeoC/FbaB aldolase family. DeoC type 2 subfamily.

The protein resides in the cytoplasm. It carries out the reaction 2-deoxy-D-ribose 5-phosphate = D-glyceraldehyde 3-phosphate + acetaldehyde. It participates in carbohydrate degradation; 2-deoxy-D-ribose 1-phosphate degradation; D-glyceraldehyde 3-phosphate and acetaldehyde from 2-deoxy-alpha-D-ribose 1-phosphate: step 2/2. Catalyzes a reversible aldol reaction between acetaldehyde and D-glyceraldehyde 3-phosphate to generate 2-deoxy-D-ribose 5-phosphate. The protein is Deoxyribose-phosphate aldolase of Escherichia coli O1:K1 / APEC.